A 404-amino-acid chain; its full sequence is Glutamate-pyruvate aminotransferase AlaA (404 aa).

2 residues coordinate L-alanine: G41 and N179. At K240 the chain carries N6-(pyridoxal phosphate)lysine. Residue R378 coordinates L-alanine.

It belongs to the class-I pyridoxal-phosphate-dependent aminotransferase family. As to quaternary structure, homodimer. It depends on pyridoxal 5'-phosphate as a cofactor.

It carries out the reaction L-alanine + 2-oxoglutarate = pyruvate + L-glutamate. It functions in the pathway amino-acid biosynthesis; L-alanine biosynthesis. In terms of biological role, involved in the biosynthesis of alanine. Catalyzes the transamination of pyruvate by glutamate, leading to the formation of L-alanine and 2-oxoglutarate. Is also able to catalyze the reverse reaction. The chain is Glutamate-pyruvate aminotransferase AlaA (alaA) from Haemophilus influenzae (strain ATCC 51907 / DSM 11121 / KW20 / Rd).